Reading from the N-terminus, the 442-residue chain is Adenylosuccinate synthetase (442 aa).

Residues G30–K36 and G58–T60 contribute to the GTP site. Catalysis depends on D31, which acts as the Proton acceptor. Mg(2+) is bound by residues D31 and G58. IMP contacts are provided by residues D31–K34, N56–H59, T148, R162, N241, T256, and R320. H59 serves as the catalytic Proton donor. A substrate-binding site is contributed by T316 to R322. Residues R322, K348–D350, and G430–G432 contribute to the GTP site.

Belongs to the adenylosuccinate synthetase family. Homodimer. Mg(2+) is required as a cofactor.

The protein resides in the cytoplasm. The enzyme catalyses IMP + L-aspartate + GTP = N(6)-(1,2-dicarboxyethyl)-AMP + GDP + phosphate + 2 H(+). It participates in purine metabolism; AMP biosynthesis via de novo pathway; AMP from IMP: step 1/2. Functionally, plays an important role in the de novo pathway and in the salvage pathway of purine nucleotide biosynthesis. Catalyzes the first committed step in the biosynthesis of AMP from IMP. This chain is Adenylosuccinate synthetase, found in Trichoplax adhaerens (Trichoplax reptans).